The following is a 303-amino-acid chain: MVRSDNDTWDLASSVGATATMVAAGRAVVSQDPGGLINDPFAAPLVRAVGIEALTMLADGKFDIEKVLPESAARVRANIDEMAVRTKFFDDYFMDATGRGVGQAVILASGLDSRAYRLPWPDGTVVYEIDQPDVIEFKTRTLADLGAEPTCERRTVSIDLRDDWPAALRAAGFDPSAPTAWCAEGLLIYLPPEAQDKLFDDIHHLSAPGSTVATEFVPALKDFDPEKARQATETLTRMGVDIDMPSLIYHGERHSASDYLETKGWQMDSAARATLFTRYGLPAPGHDDDDPLGEIIYISGTLR.

S-adenosyl-L-methionine contacts are provided by residues aspartate 130 and 159–160 (DL).

It belongs to the UPF0677 family.

In terms of biological role, exhibits S-adenosyl-L-methionine-dependent methyltransferase activity. The sequence is that of Putative S-adenosyl-L-methionine-dependent methyltransferase MSMEG_1479/MSMEI_1443 from Mycolicibacterium smegmatis (strain ATCC 700084 / mc(2)155) (Mycobacterium smegmatis).